We begin with the raw amino-acid sequence, 561 residues long: Lysine--tRNA ligase (561 aa).

The Mg(2+) site is built by E409 and E416.

This sequence belongs to the class-II aminoacyl-tRNA synthetase family. As to quaternary structure, homodimer. Mg(2+) is required as a cofactor.

It localises to the cytoplasm. It catalyses the reaction tRNA(Lys) + L-lysine + ATP = L-lysyl-tRNA(Lys) + AMP + diphosphate. This is Lysine--tRNA ligase from Nostoc sp. (strain PCC 7120 / SAG 25.82 / UTEX 2576).